The primary structure comprises 267 residues: Small ribosomal subunit protein uS2 (267 aa).

A disordered region spans residues 234-267 (DNAEEELAEAISQEEPSAAEELPDDMADNENEFE). Residues 250 to 267 (SAAEELPDDMADNENEFE) show a composition bias toward acidic residues.

This sequence belongs to the universal ribosomal protein uS2 family.

In Dichelobacter nodosus (strain VCS1703A), this protein is Small ribosomal subunit protein uS2.